The primary structure comprises 423 residues: Endoplasmic reticulum junction formation protein lunapark (423 aa).

At 1–45 (MGALLAKWRAKPSTVEVLEKMEKDIQSLEEFRDKNQKLRKIWVAR) the chain is on the cytoplasmic side. Residues 16 to 40 (EVLEKMEKDIQSLEEFRDKNQKLRK) are a coiled coil. Residues 46–66 (LFFYSTILYILTSLTVYLWYL) form a helical membrane-spanning segment. The Lumenal portion of the chain corresponds to 67 to 77 (PDGMTARLLTM). The chain crosses the membrane as a helical span at residues 78 to 98 (LLFLSFPVLIWFVRTLLILWF). At 99 to 423 (SRRTERNNDA…ETEESFMETE (325 aa)) the chain is on the cytoplasmic side. Residues 101–128 (RTERNNDALELLKTEKKKILEEVMEKET) adopt a coiled-coil conformation. Residues 147-169 (KELELPVPGPPITPRPGQDLRQR) are disordered. Residue Thr159 is modified to Phosphothreonine. Phosphoserine is present on residues Ser177, Ser179, and Ser188. The residue at position 198 (Thr198) is a Phosphothreonine. Residues 200 to 247 (SLQRDTSAPGGPPERSVQPTPQSNILQRRPGSPATTVSGMAIHPPGPP) are disordered. Residues Ser206 and Ser215 each carry the phosphoserine modification. Positions 216–225 (VQPTPQSNIL) are enriched in polar residues. Thr219 is subject to Phosphothreonine. Phosphoserine occurs at positions 222 and 231. The segment at 280–305 (CQQCFSHNGMALKEEFEYVAFRCAYC) adopts a C4-type; plays a role in ER morphology zinc-finger fold. The tract at residues 318 to 423 (APRLQEINFD…ETEESFMETE (106 aa)) is disordered. The span at 334 to 343 (DSQGSVSSVQ) shows a compositional bias: polar residues. Composition is skewed to acidic residues over residues 370–391 (QAIE…DDSE) and 414–423 (ETEESFMETE).

It belongs to the lunapark family. Homodimer; homodimerization requires the C4-type zinc finger motif and decreases during mitosis in a phosphorylation-dependent manner. Phosphorylated. Phosphorylation at Thr-159 occurs during interphase. Phosphorylation at Ser-177, Ser-179, Ser-188, Thr-198, Ser-206, Ser-215, Thr-219, Ser-222 and Ser-231 occurs during mitosis; these phosphorylations reduce both its homodimerization and the ER three-way tubular junction formation.

It is found in the endoplasmic reticulum membrane. In terms of biological role, endoplasmic reticulum (ER)-shaping membrane protein that plays a role in determining ER morphology. Involved in the stabilization of nascent three-way ER tubular junctions within the ER network. May also play a role as a curvature-stabilizing protein within three-way ER tubular junction network. The sequence is that of Endoplasmic reticulum junction formation protein lunapark (lnpk) from Xenopus tropicalis (Western clawed frog).